We begin with the raw amino-acid sequence, 599 residues long: Elongation factor 4 (599 aa).

In terms of domain architecture, tr-type G spans Lys2 to Glu184. GTP contacts are provided by residues Asp14–Thr19 and Asn131–Asp134.

It belongs to the TRAFAC class translation factor GTPase superfamily. Classic translation factor GTPase family. LepA subfamily.

It localises to the cell inner membrane. It catalyses the reaction GTP + H2O = GDP + phosphate + H(+). In terms of biological role, required for accurate and efficient protein synthesis under certain stress conditions. May act as a fidelity factor of the translation reaction, by catalyzing a one-codon backward translocation of tRNAs on improperly translocated ribosomes. Back-translocation proceeds from a post-translocation (POST) complex to a pre-translocation (PRE) complex, thus giving elongation factor G a second chance to translocate the tRNAs correctly. Binds to ribosomes in a GTP-dependent manner. The protein is Elongation factor 4 of Erwinia tasmaniensis (strain DSM 17950 / CFBP 7177 / CIP 109463 / NCPPB 4357 / Et1/99).